We begin with the raw amino-acid sequence, 364 residues long: Protein MGF 360-21R (364 aa).

It belongs to the asfivirus MGF 360 family.

Its function is as follows. Plays a role in virus cell tropism, and may be required for efficient virus replication in macrophages. The chain is Protein MGF 360-21R from African swine fever virus (isolate Pig/Kenya/KEN-50/1950) (ASFV).